Consider the following 137-residue polypeptide: Small ribosomal subunit protein bS6 (137 aa).

The interval S104–A137 is disordered. Residues N111–A137 show a composition bias toward basic and acidic residues.

It belongs to the bacterial ribosomal protein bS6 family.

Functionally, binds together with bS18 to 16S ribosomal RNA. In Helicobacter hepaticus (strain ATCC 51449 / 3B1), this protein is Small ribosomal subunit protein bS6.